The primary structure comprises 162 residues: UPF0262 protein Pden_1958 (162 aa).

The interval 1–22 (MSQSANRLCRIDIDDSALPPPS) is disordered.

This sequence belongs to the UPF0262 family.

The sequence is that of UPF0262 protein Pden_1958 from Paracoccus denitrificans (strain Pd 1222).